The primary structure comprises 40 residues: Large ribosomal subunit protein bL36B (40 aa).

The protein belongs to the bacterial ribosomal protein bL36 family.

This Leifsonia xyli subsp. xyli (strain CTCB07) protein is Large ribosomal subunit protein bL36B.